The sequence spans 164 residues: Phosphopantetheine adenylyltransferase (164 aa).

Serine 9 contributes to the substrate binding site. Residues 9-10 (SF) and histidine 17 contribute to the ATP site. Substrate is bound by residues lysine 41, leucine 78, and arginine 92. Residues 93 to 95 (GLR), glutamate 103, and 128 to 134 (GRVITST) contribute to the ATP site.

It belongs to the bacterial CoaD family. Homohexamer. Mg(2+) serves as cofactor.

The protein resides in the cytoplasm. It carries out the reaction (R)-4'-phosphopantetheine + ATP + H(+) = 3'-dephospho-CoA + diphosphate. The protein operates within cofactor biosynthesis; coenzyme A biosynthesis; CoA from (R)-pantothenate: step 4/5. Its function is as follows. Reversibly transfers an adenylyl group from ATP to 4'-phosphopantetheine, yielding dephospho-CoA (dPCoA) and pyrophosphate. This chain is Phosphopantetheine adenylyltransferase, found in Bartonella bacilliformis (strain ATCC 35685 / KC583 / Herrer 020/F12,63).